Here is a 289-residue protein sequence, read N- to C-terminus: Phosphatidylglycerol--prolipoprotein diacylglyceryl transferase (289 aa).

4 consecutive transmembrane segments (helical) span residues 18 to 38, 54 to 74, 86 to 106, and 116 to 136; these read FTIY…YVMA, DFVM…YVIF, VFYI…GVLT, and LSFW…QAIG. Arginine 137 provides a ligand contact to a 1,2-diacyl-sn-glycero-3-phospho-(1'-sn-glycerol). 3 helical membrane-spanning segments follow: residues 177–197, 205–225, and 236–256; these read HPTF…LLLL, GELF…IEGM, and LRTA…LWWY.

This sequence belongs to the Lgt family.

The protein localises to the cell membrane. The enzyme catalyses L-cysteinyl-[prolipoprotein] + a 1,2-diacyl-sn-glycero-3-phospho-(1'-sn-glycerol) = an S-1,2-diacyl-sn-glyceryl-L-cysteinyl-[prolipoprotein] + sn-glycerol 1-phosphate + H(+). The protein operates within protein modification; lipoprotein biosynthesis (diacylglyceryl transfer). Its function is as follows. Catalyzes the transfer of the diacylglyceryl group from phosphatidylglycerol to the sulfhydryl group of the N-terminal cysteine of a prolipoprotein, the first step in the formation of mature lipoproteins. The protein is Phosphatidylglycerol--prolipoprotein diacylglyceryl transferase of Halalkalibacterium halodurans (strain ATCC BAA-125 / DSM 18197 / FERM 7344 / JCM 9153 / C-125) (Bacillus halodurans).